Reading from the N-terminus, the 572-residue chain is BOS complex subunit ncln (572 aa).

The signal sequence occupies residues 1–35; it reads MFEEAGEVLENMLKVSFPLSLVLFLVLVCPLRAEA. Residues 36-530 are Extracellular-facing; that stretch reads AHEFSVYRMQ…TMNAYRVKPA (495 aa). Asn108, Asn234, and Asn436 each carry an N-linked (GlcNAc...) asparagine glycan. Residues 531 to 551 form a helical membrane-spanning segment; it reads IFDLLLAVCIASYLGVLYLAI. The Cytoplasmic portion of the chain corresponds to 552 to 572; the sequence is QNFGLLYGFLRRVTAPRVKQH.

Belongs to the nicastrin family. Component of the multi-pass translocon (MPT) complex.

The protein resides in the endoplasmic reticulum membrane. Functionally, component of the multi-pass translocon (MPT) complex that mediates insertion of multi-pass membrane proteins into the lipid bilayer of membranes. The MPT complex takes over after the SEC61 complex: following membrane insertion of the first few transmembrane segments of proteins by the SEC61 complex, the MPT complex occludes the lateral gate of the SEC61 complex to promote insertion of subsequent transmembrane regions. Antagonizes Nodal signaling and subsequent organization of axial structures during mesodermal patterning. Ectopic expression results in cyclopia, due to a defect in mesendoderm patterning. This Danio rerio (Zebrafish) protein is BOS complex subunit ncln (ncln).